Here is a 497-residue protein sequence, read N- to C-terminus: MKHFNLLSIILVIVLATSYIDAFTRNDFPEDFLFGAGTSAYQWEGAANEDGRTPSVWDTTSHCYNGSNGDIACDGYHKYKEDVKLMAEMGLESFRFSISWSRLIPNGRGRINPKGLLFYKNLIKELRSHGIEPHVTLYHYDLPQSLEDEYGGWINHKIIEDFTAFADVCFREFGEDVKLWTTINEATIFAFAFYGKDVRYGNCTTGNYCMETYIAGHNMLLAHASASNLYKLKYKSKQRGSIGLSIFALGLTPYTNSKDDEIATQRAKAFLYGWMLKPLVFGDYPDEMKRTLGSRLPVFSEEESEQVKGSSDFVGIIHYTTVYVTNQPAPYIFPSSTNKDFFTDMGAYIISTGNSSSFVFDAVPWGLEGVLQHIKHRYNNPPIYILENGSPMKHDSMLQDTPRVEYIQAYIGAVLNAIKSGSDTRGYFVWSLIDLFEVQVGYKSSFGMYYVNFSDPGRKRSPKLSASWYTGFLNGTIDVASQDMTQLQRNFSGSSSL.

The first 22 residues, 1 to 22 (MKHFNLLSIILVIVLATSYIDA), serve as a signal peptide directing secretion. Residue Q42 coordinates a beta-D-glucoside. N-linked (GlcNAc...) asparagine glycosylation occurs at N65. Residues H139 and 184–185 (NE) contribute to the a beta-D-glucoside site. The Proton donor role is filled by E185. N-linked (GlcNAc...) asparagine glycosylation is present at N202. Y319 is a binding site for a beta-D-glucoside. Residue N354 is glycosylated (N-linked (GlcNAc...) asparagine). E387, W430, and F446 together coordinate a beta-D-glucoside. Residue E387 is the Nucleophile of the active site. N452, N474, and N490 each carry an N-linked (GlcNAc...) asparagine glycan.

It belongs to the glycosyl hydrolase 1 family.

The enzyme catalyses Hydrolysis of terminal, non-reducing beta-D-glucosyl residues with release of beta-D-glucose.. This Arabidopsis thaliana (Mouse-ear cress) protein is Beta-glucosidase 8.